We begin with the raw amino-acid sequence, 425 residues long: CBS domain-containing protein CBSX6 (425 aa).

One can recognise a CBS 1 domain in the interval 16 to 90 (GKPEMVEFYE…FLAKTECLQE (75 aa)). The span at 159 to 172 (SENSSSSSGLSADS) shows a compositional bias: low complexity. Residues 159–182 (SENSSSSSGLSADSTNRPTTSMTS) are disordered. The span at 173–182 (TNRPTTSMTS) shows a compositional bias: polar residues. Helical transmembrane passes span 200–220 (IGVL…LGII) and 275–295 (YLAA…MGVE). In terms of domain architecture, CBS 2 spans 347–409 (MYRGRSAPLT…TAVTKQPSAF (63 aa)).

It localises to the vacuole membrane. This chain is CBS domain-containing protein CBSX6 (CBSX6), found in Arabidopsis thaliana (Mouse-ear cress).